Consider the following 84-residue polypeptide: Small ribosomal subunit protein bS18 (84 aa).

It belongs to the bacterial ribosomal protein bS18 family. As to quaternary structure, part of the 30S ribosomal subunit. Forms a tight heterodimer with protein bS6.

In terms of biological role, binds as a heterodimer with protein bS6 to the central domain of the 16S rRNA, where it helps stabilize the platform of the 30S subunit. This Clostridium kluyveri (strain NBRC 12016) protein is Small ribosomal subunit protein bS18.